A 273-amino-acid chain; its full sequence is Diphthine methyl ester synthase (273 aa).

S-adenosyl-L-methionine contacts are provided by residues leucine 10, aspartate 87, glycine 90, serine 115 to isoleucine 116, leucine 166, valine 224, and histidine 249.

The protein belongs to the diphthine synthase family.

The enzyme catalyses 2-[(3S)-amino-3-carboxypropyl]-L-histidyl-[translation elongation factor 2] + 4 S-adenosyl-L-methionine = diphthine methyl ester-[translation elongation factor 2] + 4 S-adenosyl-L-homocysteine + 3 H(+). It functions in the pathway protein modification; peptidyl-diphthamide biosynthesis. S-adenosyl-L-methionine-dependent methyltransferase that catalyzes four methylations of the modified target histidine residue in translation elongation factor 2 (EF-2), to form an intermediate called diphthine methyl ester. The four successive methylation reactions represent the second step of diphthamide biosynthesis. In Dictyostelium discoideum (Social amoeba), this protein is Diphthine methyl ester synthase (dph5).